A 196-amino-acid polypeptide reads, in one-letter code: Protein Flattop (196 aa).

The interval 107 to 196 (NGLRPEIFGK…PHAGRNLAEV (90 aa)) is disordered. Over residues 113 to 124 (IFGKPHDPDSQK) the composition is skewed to basic and acidic residues. Residues 137 to 149 (APSPTIIPSSPAS) show a composition bias toward low complexity. Over residues 150–162 (NLSSPDQLQSSHP) the composition is skewed to polar residues.

This sequence belongs to the Flattop family. In terms of assembly, microtubule inner protein component of sperm flagellar doublet microtubules. Interacts with DLG3. As to expression, expressed in trachea multiciliated cells.

It is found in the cytoplasm. Its subcellular location is the cytoskeleton. The protein resides in the cilium basal body. It localises to the cell projection. The protein localises to the cilium. It is found in the apical cell membrane. Its subcellular location is the cilium axoneme. The protein resides in the flagellum axoneme. Its function is as follows. Microtubule inner protein (MIP) part of the dynein-decorated doublet microtubules (DMTs) in cilia axoneme. Acts as a regulator of cilium basal body docking and positioning in mono- and multiciliated cells. Regulates basal body docking and cilia formation in multiciliated lung cells. Regulates kinocilium positioning and stereocilia bundle morphogenesis in the inner ear. The chain is Protein Flattop from Bos taurus (Bovine).